A 187-amino-acid chain; its full sequence is Basic helix-loop-helix transcription factor scleraxis (187 aa).

2 disordered regions span residues 21–83 and 140–163; these read LSED…TNSV and AFFH…QPKQ. Positions 34–43 are enriched in basic and acidic residues; that stretch reads SDEKPFHLDA. A compositionally biased stretch (basic residues) spans 50-72; the sequence is AGKRRSGKKAGRLHREPRQRHTA. The 53-residue stretch at 67-119 folds into the bHLH domain; sequence RQRHTANARERDRTNSVNTAFTALRTLIPTEPADRKLSKIETLRLASSYISHL.

Efficient DNA binding requires dimerization with another bHLH protein. Dimerizes and binds the E-box consensus sequence with E12. As to expression, expressed in the intersomitic, the superficial proximomedial limb mesenchyme and the subectodermal mesenchyme.

The protein localises to the nucleus. Plays an early essential role in mesoderm formation, as well as a later role in formation of somite-derived chondrogenic lineages. The protein is Basic helix-loop-helix transcription factor scleraxis (SCX) of Gallus gallus (Chicken).